Reading from the N-terminus, the 410-residue chain is Digeranylgeranylglycerophospholipid reductase (410 aa).

A15, E34, V118, D286, G298, and I299 together coordinate FAD. Residues K343 and A379 each coordinate a 2,3-bis-O-(geranylgeranyl)-sn-glycerol 1-phospholipid.

Belongs to the geranylgeranyl reductase family. DGGGPL reductase subfamily. Requires FAD as cofactor.

It catalyses the reaction a 2,3-bis-O-phytanyl-sn-glycerol 1-phospholipid + 8 A = a 2,3-bis-O-(geranylgeranyl)-sn-glycerol 1-phospholipid + 8 AH2. The catalysed reaction is 2,3-bis-O-(phytanyl)-sn-glycerol 1-phosphate + 8 A = 2,3-bis-O-(geranylgeranyl)-sn-glycerol 1-phosphate + 8 AH2. It carries out the reaction CDP-2,3-bis-O-(geranylgeranyl)-sn-glycerol + 8 AH2 = CDP-2,3-bis-O-(phytanyl)-sn-glycerol + 8 A. The enzyme catalyses archaetidylserine + 8 AH2 = 2,3-bis-O-phytanyl-sn-glycero-3-phospho-L-serine + 8 A. It participates in membrane lipid metabolism; glycerophospholipid metabolism. Is involved in the reduction of 2,3-digeranylgeranylglycerophospholipids (unsaturated archaeols) into 2,3-diphytanylglycerophospholipids (saturated archaeols) in the biosynthesis of archaeal membrane lipids. Can fully reduce the unsaturated isoprenoid side chains of membrane phospholipids and glycolipids. Is also able to reduce the omega-position isoprene of dolichol phosphate. The protein is Digeranylgeranylglycerophospholipid reductase of Haloferax volcanii (strain ATCC 29605 / DSM 3757 / JCM 8879 / NBRC 14742 / NCIMB 2012 / VKM B-1768 / DS2) (Halobacterium volcanii).